The primary structure comprises 397 residues: Protein PEP-RELATED DEVELOPMENT ARRESTED 1, chloroplastic (397 aa).

The transit peptide at 1–52 (MLQSIHLRFSSTPSPSKRESLIIPSVICSFPFTSSSFRPKQTQKLKRLVQFC) directs the protein to the chloroplast. The segment covering 315-334 (KDEGADNLSKEDDSSTEGRK) has biased composition (basic and acidic residues). The interval 315 to 351 (KDEGADNLSKEDDSSTEGRKPSGLNGRGSVTGRKPLP) is disordered.

In terms of assembly, interacts with FSD2 and MRL7. As to expression, highly expressed in young leaves, shoots and flowers. Expressed at low levels in stems and siliques.

The protein resides in the plastid. Its subcellular location is the chloroplast stroma. It is found in the chloroplast nucleoid. Functionally, plays an essential role in early steps of chloroplast development. May be involved in the redox control of plastid gene expression by maintening the redox state around chloroplast nucleoids. May positively regulate plastid-encoded RNA polymerase (PEP) activity, through binding to FSD2. The protein is Protein PEP-RELATED DEVELOPMENT ARRESTED 1, chloroplastic (PRDA1) of Arabidopsis thaliana (Mouse-ear cress).